A 554-amino-acid polypeptide reads, in one-letter code: Potassium-transporting ATPase potassium-binding subunit (554 aa).

12 consecutive transmembrane segments (helical) span residues 1–21 (MSSQ…LALA), 59–79 (WPAY…FLYL), 131–151 (GLAV…VALV), 174–194 (VRIL…AGAI), 246–266 (PNPL…FALT), 279–299 (GYAI…LMMW), 323–343 (FGIA…TGAV), 352–372 (GFGG…PGGV), 375–395 (GLYG…LMVG), 412–432 (FAAC…AVAM), 481–501 (IGIA…ALAG), and 525–545 (GLLV…ALAL).

The protein belongs to the KdpA family. As to quaternary structure, the system is composed of three essential subunits: KdpA, KdpB and KdpC.

It localises to the cell membrane. Functionally, part of the high-affinity ATP-driven potassium transport (or Kdp) system, which catalyzes the hydrolysis of ATP coupled with the electrogenic transport of potassium into the cytoplasm. This subunit binds the extracellular potassium ions and delivers the ions to the membrane domain of KdpB through an intramembrane tunnel. The polypeptide is Potassium-transporting ATPase potassium-binding subunit (Streptomyces griseus subsp. griseus (strain JCM 4626 / CBS 651.72 / NBRC 13350 / KCC S-0626 / ISP 5235)).